The chain runs to 145 residues: Basic phospholipase A2 textilotoxin A chain (145 aa).

Positions 1–19 are cleaved as a signal peptide; the sequence is MHPAHLLVLLGVCVSLLGA. Residues 20 to 27 constitute a propeptide that is removed on maturation; the sequence is SDIPPLPL. Disulfide bonds link C38–C98, C54–C144, C56–C72, C71–C125, C78–C118, C87–C111, and C105–C116. 3 residues coordinate Ca(2+): Y55, G57, and G59. Residue H75 is part of the active site. Ca(2+) is bound at residue D76. D119 is a catalytic residue.

This sequence belongs to the phospholipase A2 family. Group I subfamily. D49 sub-subfamily. As to quaternary structure, heterohexamer. 2 forms exist: 2 A or 2 B chains, 2 C chains and 2 covalently-linked D chains, and 1 A or 1 B, 1 C, 2 covalently-linked D chains and 2 differentially glycosylated covalently-linked D chains. Textilotoxin was originally described as pentameric. The cofactor is Ca(2+). In terms of tissue distribution, expressed by the venom gland.

It localises to the secreted. It carries out the reaction a 1,2-diacyl-sn-glycero-3-phosphocholine + H2O = a 1-acyl-sn-glycero-3-phosphocholine + a fatty acid + H(+). Functionally, snake venom oligomeric phospholipase A2 that has potent presynaptic neurotoxicity. Chain A possesses a very low toxicity, but is essential for neurotoxicity. Possesses a low enzymatic activity. PLA2 catalyzes the calcium-dependent hydrolysis of the 2-acyl groups in 3-sn-phosphoglycerides. In Pseudonaja textilis (Eastern brown snake), this protein is Basic phospholipase A2 textilotoxin A chain.